The primary structure comprises 720 residues: Denticleless protein homolog (720 aa).

WD repeat units follow at residues 43 to 85, 92 to 131, and 134 to 174; these read GMPV…TTKL, AHSNAVFDLAWVPGEHRIVTASGDQTAKVWDVRAGELLGI, and GHQC…KDGF. Positions 164–167 match the DDB1-binding motif motif; the sequence is WDTR. Positions 193–200 match the Nuclear localization signal motif; that stretch reads PSKLRKKR. WD repeat units lie at residues 211-250, 266-305, 310-351, and 355-395; these read DFQQSVTVVLLQDEHTLISAGAVDGVIKVWDLRKNYAAYR, TRKLGYSSLVLDSTGANLFANCTDDSIYMFNMTSLKTFPV, GHQN…LPPR, and GHSQ…EEEK. The DDB1-binding motif motif lies at 240–243; sequence WDLR. 4 disordered regions span residues 411–437, 476–495, 528–552, and 607–698; these read KPEEQRGAGRSASPQSTPAKAFSVGSP, PAKLSGASPRTSPKLVPSSK, QSLLETSSTPKAQHSQAEKRAKRRL, and NEHE…TSPK. Positions 528–542 are enriched in polar residues; the sequence is QSLLETSSTPKAQHS. 2 stretches are compositionally biased toward basic and acidic residues: residues 543–552 and 642–660; these read QAEKRAKRRL and CERDSDVVDKENSSPERKN.

This sequence belongs to the WD repeat cdt2 family. Component of the DCX(DTL) E3 ubiquitin ligase complex, at least composed of CUL4 (CUL4A or CUL4B), DDB1, DTL/CDT2 and RBX1.

It localises to the nucleus. Its subcellular location is the cytoplasm. It is found in the cytoskeleton. The protein localises to the microtubule organizing center. The protein resides in the centrosome. It localises to the chromosome. It functions in the pathway protein modification; protein ubiquitination. Functionally, substrate-specific adapter of a DCX (DDB1-CUL4-X-box) E3 ubiquitin-protein ligase complex required for cell cycle control, DNA damage response and translesion DNA synthesis. The DCX(DTL) complex, also named CRL4(CDT2) complex, mediates the polyubiquitination and subsequent degradation of CDT1, CDKN1A/p21(CIP1), KMT5A and SDE2. CDT1 degradation in response to DNA damage is necessary to ensure proper cell cycle regulation of DNA replication. CDKN1A/p21(CIP1) degradation during S phase or following UV irradiation is essential to control replication licensing. KMT5A degradation is also important for a proper regulation of mechanisms such as TGF-beta signaling, cell cycle progression, DNA repair and cell migration. Most substrates require their interaction with PCNA for their polyubiquitination: substrates interact with PCNA via their PIP-box, and those containing the 'K+4' motif in the PIP box, recruit the DCX(DTL) complex, leading to their degradation. In undamaged proliferating cells, the DCX(DTL) complex also promotes the 'Lys-164' monoubiquitination of PCNA, thereby being involved in PCNA-dependent translesion DNA synthesis. May play a role in the regulation of the circadian clock. This chain is Denticleless protein homolog (DTL), found in Gallus gallus (Chicken).